The following is a 374-amino-acid chain: Tryptophan--tRNA ligase (374 aa).

A 'HIGH' region motif is present at residues 81–89; it reads PSGPVHIGH. The 'KMSKS' region signature appears at 258–262; that stretch reads KMSAS.

The protein belongs to the class-I aminoacyl-tRNA synthetase family.

It localises to the cytoplasm. The catalysed reaction is tRNA(Trp) + L-tryptophan + ATP = L-tryptophyl-tRNA(Trp) + AMP + diphosphate + H(+). This Pyrobaculum calidifontis (strain DSM 21063 / JCM 11548 / VA1) protein is Tryptophan--tRNA ligase.